A 466-amino-acid chain; its full sequence is ATP synthase subunit beta (466 aa).

Position 156–163 (156–163) interacts with ATP; that stretch reads GGAGVGKT.

Belongs to the ATPase alpha/beta chains family. F-type ATPases have 2 components, CF(1) - the catalytic core - and CF(0) - the membrane proton channel. CF(1) has five subunits: alpha(3), beta(3), gamma(1), delta(1), epsilon(1). CF(0) has three main subunits: a(1), b(2) and c(9-12). The alpha and beta chains form an alternating ring which encloses part of the gamma chain. CF(1) is attached to CF(0) by a central stalk formed by the gamma and epsilon chains, while a peripheral stalk is formed by the delta and b chains.

It localises to the cell inner membrane. It carries out the reaction ATP + H2O + 4 H(+)(in) = ADP + phosphate + 5 H(+)(out). Its function is as follows. Produces ATP from ADP in the presence of a proton gradient across the membrane. The catalytic sites are hosted primarily by the beta subunits. The polypeptide is ATP synthase subunit beta (Polynucleobacter necessarius subsp. necessarius (strain STIR1)).